We begin with the raw amino-acid sequence, 647 residues long: Carotenoid phi-ring synthase (647 aa).

Residues alanine 67, 86 to 87, lysine 94, and tyrosine 120 contribute to the FAD site; that span reads EA. Residues 322-416 enclose the Rieske domain; it reads VASIPKREVP…VREAGEMLVI (95 aa). [2Fe-2S] cluster-binding residues include cysteine 362, histidine 364, cysteine 380, and histidine 383. The FAD site is built by aspartate 601 and methionine 612.

Belongs to the carotenoid/retinoid oxidoreductase family. It depends on FAD as a cofactor. The cofactor is [2Fe-2S] cluster.

The enzyme catalyses a carotenoid beta-end derivative + 2 A = a carotenoid phi-end derivative + 2 AH2. Its pathway is carotenoid biosynthesis. In terms of biological role, involved in the biosynthesis of chlorobactene, a carotenoid with aromatic end group. Catalyzes the introduction of two additional double bonds into the ionone ring of gamma-carotene to produce chlorobactene. The reaction includes an intramolecular methyl transfer from position C1 to position C2 of the ring. This chain is Carotenoid phi-ring synthase, found in Chlorobaculum tepidum (strain ATCC 49652 / DSM 12025 / NBRC 103806 / TLS) (Chlorobium tepidum).